Reading from the N-terminus, the 373-residue chain is Probable G-protein coupled receptor 45 (373 aa).

The Extracellular segment spans residues 1-38; that stretch reads MACNSTPMGTYEHLLLNVSNTLDPGDTPLSAPLRISLA. A glycan (N-linked (GlcNAc...) asparagine) is linked at Asn17. A helical transmembrane segment spans residues 39 to 59; it reads IMMLLMIVVGFLGNTVVCIIV. Residues 60–75 are Cytoplasmic-facing; it reads YQRPAMRSAINLLLAT. A helical transmembrane segment spans residues 76–96; sequence LAFSDIMLSLCCMPFTAITLI. The Extracellular segment spans residues 97-109; the sequence is TVRWHFGDHFCRL. The chain crosses the membrane as a helical span at residues 110–130; the sequence is SATLYWFFVLEGVAILLIISV. Topologically, residues 131–149 are cytoplasmic; the sequence is DRFLIIVQRQDKLNPRRAK. The helical transmembrane segment at 150–170 threads the bilayer; that stretch reads MIIAASWVLSFCISAPSFTGW. At 171-198 the chain is on the extracellular side; it reads TFMEVPARAPQCVLGYTEFPAERAYVVT. The helical transmembrane segment at 199-219 threads the bilayer; that stretch reads LVVAVFFAPFGVMLCSYLCIL. Over 220–269 the chain is Cytoplasmic; that stretch reads NTVRKNAVRVHNQSDSLDLRQLTGAGLRRLRRQQQQASLDLSFKTKAFTT. The helical transmembrane segment at 270–290 threads the bilayer; the sequence is ILILFVGFSLCWLPHSVYSLL. Residues 291–306 lie on the Extracellular side of the membrane; the sequence is SAFSRRFYYSASFYTT. A helical membrane pass occupies residues 307-327; that stretch reads STCVLWLSYLKSVFNPIVYCW. The Cytoplasmic portion of the chain corresponds to 328–373; sequence RIKKFREACIELLPHTFQILPKVPERIQRKIQPSTIYVCNENQSAV.

The protein belongs to the G-protein coupled receptor 1 family. As to expression, brain specific.

Its subcellular location is the cell membrane. Orphan receptor. May play a role in brain function. This is Probable G-protein coupled receptor 45 (Gpr45) from Mus musculus (Mouse).